The following is a 378-amino-acid chain: Erythronate-4-phosphate dehydrogenase (378 aa).

Residues Ser45 and Thr66 each contribute to the substrate site. 2 residues coordinate NAD(+): Asp146 and Thr175. Arg208 is a catalytic residue. Asp232 lines the NAD(+) pocket. Residue Glu237 is part of the active site. The Proton donor role is filled by His254. Gly257 lines the NAD(+) pocket. Residue Tyr258 coordinates substrate.

The protein belongs to the D-isomer specific 2-hydroxyacid dehydrogenase family. PdxB subfamily. As to quaternary structure, homodimer.

It localises to the cytoplasm. The catalysed reaction is 4-phospho-D-erythronate + NAD(+) = (R)-3-hydroxy-2-oxo-4-phosphooxybutanoate + NADH + H(+). It participates in cofactor biosynthesis; pyridoxine 5'-phosphate biosynthesis; pyridoxine 5'-phosphate from D-erythrose 4-phosphate: step 2/5. Catalyzes the oxidation of erythronate-4-phosphate to 3-hydroxy-2-oxo-4-phosphonooxybutanoate. In Escherichia coli (strain ATCC 8739 / DSM 1576 / NBRC 3972 / NCIMB 8545 / WDCM 00012 / Crooks), this protein is Erythronate-4-phosphate dehydrogenase.